The primary structure comprises 283 residues: CDP-abequose synthase (283 aa).

Residues 7-13, 48-49, Tyr129, and Lys133 each bind NAD(+); these read GGSGYIG and EF. Tyr129 acts as the Proton acceptor in catalysis.

The protein belongs to the NAD(P)-dependent epimerase/dehydratase family.

The catalysed reaction is CDP-alpha-D-abequose + NADP(+) = CDP-4-dehydro-3,6-dideoxy-alpha-D-glucose + NADPH + H(+). It functions in the pathway bacterial outer membrane biogenesis; LPS O-antigen biosynthesis. In terms of biological role, the CDP-abequose synthase is involved in lipopolysaccharides (LPS) synthesis containing abequose which are important antigens of the cell surface responsible for the serological O specificity. Derivatives of the 3,6-dideoxyhexose group have a particular highly immunogenic character. The chain is CDP-abequose synthase (rfbJ) from Yersinia pseudotuberculosis.